A 130-amino-acid polypeptide reads, in one-letter code: Ribonuclease P protein component 2 (130 aa).

The protein belongs to the eukaryotic/archaeal RNase P protein component 2 family. Consists of a catalytic RNA component and at least 4-5 protein subunits.

It localises to the cytoplasm. The enzyme catalyses Endonucleolytic cleavage of RNA, removing 5'-extranucleotides from tRNA precursor.. In terms of biological role, part of ribonuclease P, a protein complex that generates mature tRNA molecules by cleaving their 5'-ends. The sequence is that of Ribonuclease P protein component 2 from Methanococcus maripaludis (strain C5 / ATCC BAA-1333).